The sequence spans 338 residues: Ketol-acid reductoisomerase (NADP(+)) (338 aa).

The region spanning 1–181 (MQIYYDKDAD…GGGRAGIIET (181 aa)) is the KARI N-terminal Rossmann domain. Residues 24–27 (YGSQ), arginine 47, serine 50, serine 52, and 82–85 (DEHQ) each bind NADP(+). Histidine 107 is an active-site residue. Glycine 133 contributes to the NADP(+) binding site. Residues 182–327 (TFREETETDL…ARLRDMMPWI (146 aa)) enclose the KARI C-terminal knotted domain. The Mg(2+) site is built by aspartate 190, glutamate 194, glutamate 226, and glutamate 230. Residue serine 251 coordinates substrate.

Belongs to the ketol-acid reductoisomerase family. Mg(2+) is required as a cofactor.

The enzyme catalyses (2R)-2,3-dihydroxy-3-methylbutanoate + NADP(+) = (2S)-2-acetolactate + NADPH + H(+). The catalysed reaction is (2R,3R)-2,3-dihydroxy-3-methylpentanoate + NADP(+) = (S)-2-ethyl-2-hydroxy-3-oxobutanoate + NADPH + H(+). It functions in the pathway amino-acid biosynthesis; L-isoleucine biosynthesis; L-isoleucine from 2-oxobutanoate: step 2/4. The protein operates within amino-acid biosynthesis; L-valine biosynthesis; L-valine from pyruvate: step 2/4. Functionally, involved in the biosynthesis of branched-chain amino acids (BCAA). Catalyzes an alkyl-migration followed by a ketol-acid reduction of (S)-2-acetolactate (S2AL) to yield (R)-2,3-dihydroxy-isovalerate. In the isomerase reaction, S2AL is rearranged via a Mg-dependent methyl migration to produce 3-hydroxy-3-methyl-2-ketobutyrate (HMKB). In the reductase reaction, this 2-ketoacid undergoes a metal-dependent reduction by NADPH to yield (R)-2,3-dihydroxy-isovalerate. The sequence is that of Ketol-acid reductoisomerase (NADP(+)) from Methylococcus capsulatus (strain ATCC 33009 / NCIMB 11132 / Bath).